Consider the following 526-residue polypeptide: D-arabinono-1,4-lactone oxidase (526 aa).

Residues 22–196 (FWSRPSLYFQ…VYATLRTVPA (175 aa)) form the FAD-binding PCMH-type domain. Residue His-59 is modified to Pros-8alpha-FAD histidine.

It belongs to the oxygen-dependent FAD-linked oxidoreductase family. Requires FAD as cofactor.

The protein localises to the mitochondrion membrane. The catalysed reaction is D-arabinono-1,4-lactone + O2 = dehydro-D-arabinono-1,4-lactone + H2O2 + H(+). It functions in the pathway cofactor biosynthesis; D-erythroascorbate biosynthesis; dehydro-D-arabinono-1,4-lactone from D-arabinose: step 2/2. This Yarrowia lipolytica (strain CLIB 122 / E 150) (Yeast) protein is D-arabinono-1,4-lactone oxidase (ALO1).